Here is a 167-residue protein sequence, read N- to C-terminus: uncharacterized protein (167 aa).

The protein to A.aeolicus aq_328.

This is an uncharacterized protein from Aquifex aeolicus (strain VF5).